A 302-amino-acid polypeptide reads, in one-letter code: L-aminoadipate-semialdehyde dehydrogenase-phosphopantetheinyl transferase (302 aa).

CoA contacts are provided by residues arginine 44, 83–88 (RTGKGK), and 105–108 (NVSH). 2 residues coordinate Mg(2+): aspartate 126 and glutamate 178. 178 to 182 (ESFIK) serves as a coordination point for CoA.

It belongs to the P-Pant transferase superfamily. AcpS family. In terms of assembly, monomer. Mg(2+) is required as a cofactor.

The protein localises to the cytoplasm. It localises to the cytosol. It carries out the reaction apo-[ACP] + CoA = holo-[ACP] + adenosine 3',5'-bisphosphate + H(+). The catalysed reaction is apo-[ACP] + acetyl-CoA = acetyl-[ACP] + adenosine 3',5'-bisphosphate + H(+). Its function is as follows. Catalyzes the post-translational modification of target proteins by phosphopantetheine. Can transfer the 4'-phosphopantetheine moiety from coenzyme A, regardless of whether the CoA is presented in the free thiol form or as an acetyl thioester, to a serine residue of a broad range of acceptors. The protein is L-aminoadipate-semialdehyde dehydrogenase-phosphopantetheinyl transferase (aasdhppt) of Xenopus laevis (African clawed frog).